The sequence spans 736 residues: Phosphoribosylformylglycinamidine synthase subunit PurL (736 aa).

The active site involves His49. The ATP site is built by Tyr52 and Lys91. Glu93 provides a ligand contact to Mg(2+). Residues 94-97 (SHNH) and Arg116 each bind substrate. His95 functions as the Proton acceptor in the catalytic mechanism. Position 117 (Asp117) interacts with Mg(2+). Gln240 lines the substrate pocket. Asp268 provides a ligand contact to Mg(2+). 312-314 (ESQ) contributes to the substrate binding site. 2 residues coordinate ATP: Asp493 and Gly530. Asn531 contacts Mg(2+). Ser533 serves as a coordination point for substrate.

It belongs to the FGAMS family. Monomer. Part of the FGAM synthase complex composed of 1 PurL, 1 PurQ and 2 PurS subunits.

It localises to the cytoplasm. The catalysed reaction is N(2)-formyl-N(1)-(5-phospho-beta-D-ribosyl)glycinamide + L-glutamine + ATP + H2O = 2-formamido-N(1)-(5-O-phospho-beta-D-ribosyl)acetamidine + L-glutamate + ADP + phosphate + H(+). The protein operates within purine metabolism; IMP biosynthesis via de novo pathway; 5-amino-1-(5-phospho-D-ribosyl)imidazole from N(2)-formyl-N(1)-(5-phospho-D-ribosyl)glycinamide: step 1/2. Its function is as follows. Part of the phosphoribosylformylglycinamidine synthase complex involved in the purines biosynthetic pathway. Catalyzes the ATP-dependent conversion of formylglycinamide ribonucleotide (FGAR) and glutamine to yield formylglycinamidine ribonucleotide (FGAM) and glutamate. The FGAM synthase complex is composed of three subunits. PurQ produces an ammonia molecule by converting glutamine to glutamate. PurL transfers the ammonia molecule to FGAR to form FGAM in an ATP-dependent manner. PurS interacts with PurQ and PurL and is thought to assist in the transfer of the ammonia molecule from PurQ to PurL. This Rhodopseudomonas palustris (strain BisB5) protein is Phosphoribosylformylglycinamidine synthase subunit PurL.